The chain runs to 382 residues: uncharacterized protein (382 aa).

Transmembrane regions (helical) follow at residues Val8–Leu28, Met45–Ile65, Tyr75–Trp95, Phe102–Ser122, Leu131–Ser151, Leu157–Phe177, Leu204–Pro224, Gly231–Gly251, Val274–Ile294, Ala325–Met345, and Ser349–Leu369.

The protein belongs to the major facilitator superfamily. YcaD (TC 2.A.1.26) family.

The protein resides in the cell inner membrane. This is an uncharacterized protein from Salmonella gallinarum (strain 287/91 / NCTC 13346).